A 307-amino-acid chain; its full sequence is MATH domain and coiled-coil domain-containing protein At3g58380 (307 aa).

Positions 6 to 132 constitute an MATH domain; it reads DKKFVWVIKD…CREITIVIEV (127 aa). A coiled-coil region spans residues 238-290; the sequence is KVDWLEKKLKEVKEKKKNVDNGKARLQQIEEDLQKLNQKRLDLKDILDKEKAN.

This Arabidopsis thaliana (Mouse-ear cress) protein is MATH domain and coiled-coil domain-containing protein At3g58380.